We begin with the raw amino-acid sequence, 680 residues long: NADPH--cytochrome P450 reductase (680 aa).

The Lumenal segment spans residues 1–5 (MALDK). A helical membrane pass occupies residues 6-23 (LDLYVIITLVVAIAAYFA). The Cytoplasmic segment spans residues 24-680 (KNQFLDQQQD…VQNRYQEDVW (657 aa)). In terms of domain architecture, Flavodoxin-like spans 60–204 (TLLLFGSQTG…DFLAWKDNVF (145 aa)). FMN-binding positions include 66–71 (SQTGTA), 117–120 (ATYG), 152–161 (LGNSTYEFFN), and Asp187. The region spanning 264 to 509 (THPFLARIVK…NGPRGKFSKF (246 aa)) is the FAD-binding FR-type domain. Residue Arg283 participates in NADP(+) binding. FAD is bound by residues 439-442 (RYYS), 457-459 (TAV), and 473-476 (GVVT). NADP(+)-binding positions include Thr537, 599-600 (SR), 606-610 (KVYVQ), and Asp642. Residue Trp680 participates in FAD binding.

This sequence belongs to the NADPH--cytochrome P450 reductase family. In the N-terminal section; belongs to the flavodoxin family. It in the C-terminal section; belongs to the flavoprotein pyridine nucleotide cytochrome reductase family. The cofactor is FAD. It depends on FMN as a cofactor.

The protein resides in the endoplasmic reticulum membrane. The protein localises to the mitochondrion outer membrane. It localises to the cell membrane. The catalysed reaction is 2 oxidized [cytochrome P450] + NADPH = 2 reduced [cytochrome P450] + NADP(+) + H(+). Functionally, this enzyme is required for electron transfer from NADP to cytochrome P450 in microsomes. It can also provide electron transfer to heme oxygenase and cytochrome B5. Involved in ergosterol biosynthesis. The chain is NADPH--cytochrome P450 reductase from Candida tropicalis (Yeast).